Consider the following 229-residue polypeptide: Triosephosphate isomerase (229 aa).

9-11 (NYK) provides a ligand contact to substrate. Residue histidine 93 is the Electrophile of the active site. Catalysis depends on glutamate 141, which acts as the Proton acceptor. Residues isoleucine 146, glycine 180, and 201–202 (AS) each bind substrate.

It belongs to the triosephosphate isomerase family. Homotetramer; dimer of dimers.

The protein localises to the cytoplasm. The enzyme catalyses D-glyceraldehyde 3-phosphate = dihydroxyacetone phosphate. It participates in carbohydrate biosynthesis; gluconeogenesis. The protein operates within carbohydrate degradation; glycolysis; D-glyceraldehyde 3-phosphate from glycerone phosphate: step 1/1. Its function is as follows. Involved in the gluconeogenesis. Catalyzes stereospecifically the conversion of dihydroxyacetone phosphate (DHAP) to D-glyceraldehyde-3-phosphate (G3P). This Sulfurisphaera tokodaii (strain DSM 16993 / JCM 10545 / NBRC 100140 / 7) (Sulfolobus tokodaii) protein is Triosephosphate isomerase.